Consider the following 153-residue polypeptide: Phosphatase NudJ (153 aa).

Residues 3 to 131 enclose the Nudix hydrolase domain; the sequence is KPHVTVACVV…LVAESIRCYQ (129 aa). The short motif at 36-57 is the Nudix box element; the sequence is GHLEADETLVEAAARELWEETG.

This sequence belongs to the Nudix hydrolase family. NudJ subfamily. Monomer. Requires Mg(2+) as cofactor.

This chain is Phosphatase NudJ (nudJ), found in Escherichia coli O139:H28 (strain E24377A / ETEC).